We begin with the raw amino-acid sequence, 463 residues long: Pentatricopeptide repeat-containing protein At2g17670 (463 aa).

The segment at 1–63 (MGKVPSSFRS…PSLRNPFKSP (63 aa)) is disordered. 9 PPR repeats span residues 121–157 (GRSTFLILLSHACRAPDSSISNVHRVLNLMVNNGLEP), 158–192 (DQVTTDIAVRSLCETGRVDEAKDLMKELTEKHSPP), 193–223 (DTYTYNFLLKHLCKCKDLHVVYEFVDEMRDD), 229–263 (DLVSFTILIDNVCNSKNLREAMYLVSKLGNAGFKP), 264–298 (DCFLYNTIMKGFCTLSKGSEAVGVYKKMKEEGVEP), 299–333 (DQITYNTLIFGLSKAGRVEEARMYLKTMVDAGYEP), 334–368 (DTATYTSLMNGMCRKGESLGALSLLEEMEARGCAP), 369–403 (NDCTYNTLLHGLCKARLMDKGMELYEMMKSSGVKL), and 404–438 (ESNGYATLVRSLVKSGKVAEAYEVFDYAVDSKSLS).

The protein belongs to the PPR family. P subfamily.

This is Pentatricopeptide repeat-containing protein At2g17670 from Arabidopsis thaliana (Mouse-ear cress).